A 328-amino-acid chain; its full sequence is P2Y purinoceptor 6 (328 aa).

At 1 to 27 (MEWDNGTGQALGLPPTTCVYRENFKQL) the chain is on the extracellular side. N5 carries an N-linked (GlcNAc...) asparagine glycan. Residues 28–48 (LLPPVYSAVLAAGLPLNICVI) form a helical membrane-spanning segment. Residues 49-62 (TQICTSRRALTRTA) lie on the Cytoplasmic side of the membrane. The helical transmembrane segment at 63 to 83 (VYTLNLALADLLYACSLPLLI) threads the bilayer. The Extracellular portion of the chain corresponds to 84-101 (YNYAQGDHWPFGDFACRL). C99 and C177 form a disulfide bridge. Residues 102–122 (VRFLFYANLHGSILFLTCISF) traverse the membrane as a helical segment. At 123-144 (QRYLGICHPLAPWHKRGGRRAA) the chain is on the cytoplasmic side. Residues 145-165 (WLVCVAVWLAVTTQCLPTAIF) form a helical membrane-spanning segment. The Extracellular segment spans residues 166-194 (AATGIQRNRTVCYDLSPPALATHYMPYGM). Residues 195 to 215 (ALTVIGFLLPFAALLACYCLL) form a helical membrane-spanning segment. The Cytoplasmic portion of the chain corresponds to 216-236 (ACRLCRQDGPAEPVAQERRGK). Residues 237–257 (AARMAVVVAAAFAISFLPFHI) traverse the membrane as a helical segment. At 258 to 280 (TKTAYLAVRSTPGVPCTVLEAFA) the chain is on the extracellular side. Residues 281–303 (AAYKGTRPFASANSVLDPILFYF) traverse the membrane as a helical segment. Residues 304-328 (TQKKFRRRPHELLQKLTAKWQRQGR) lie on the Cytoplasmic side of the membrane.

The protein belongs to the G-protein coupled receptor 1 family.

The protein localises to the cell membrane. Receptor for extracellular UDP &gt; UTP &gt; ATP. The activity of this receptor is mediated by G proteins which activate a phosphatidylinositol-calcium second messenger system. The protein is P2Y purinoceptor 6 (P2RY6) of Homo sapiens (Human).